Consider the following 29-residue polypeptide: Protein Tat (29 aa).

The disordered stretch occupies residues 1 to 29; sequence PSSQPRGDPTGQEEPKKKVEKKTTTDPFD. A Cell attachment site motif is present at residues 6–8; sequence RGD. A compositionally biased stretch (basic and acidic residues) spans 13–29; the sequence is EEPKKKVEKKTTTDPFD.

The protein belongs to the lentiviruses Tat family. In terms of assembly, interacts with host CCNT1. Associates with the P-TEFb complex composed at least of Tat, P-TEFb (CDK9 and CCNT1), TAR RNA, RNA Pol II. Recruits the HATs CREBBP, TAF1/TFIID, EP300, PCAF and GCN5L2. Interacts with host KAT5/Tip60; this interaction targets the latter to degradation. Interacts with the host deacetylase SIRT1. Interacts with host capping enzyme RNGTT; this interaction stimulates RNGTT. Binds to host KDR, and to the host integrins ITGAV/ITGB3 and ITGA5/ITGB1. Interacts with host KPNB1/importin beta-1 without previous binding to KPNA1/importin alpha-1. Interacts with EIF2AK2. Interacts with host nucleosome assembly protein NAP1L1; this interaction may be required for the transport of Tat within the nucleus, since the two proteins interact at the nuclear rim. Interacts with host C1QBP/SF2P32; this interaction involves lysine-acetylated Tat. Interacts with the host chemokine receptors CCR2, CCR3 and CXCR4. Interacts with host DPP4/CD26; this interaction may trigger an anti-proliferative effect. Interacts with host LDLR. Interacts with the host extracellular matrix metalloproteinase MMP1. Interacts with host PRMT6; this interaction mediates Tat's methylation. Interacts with, and is ubiquitinated by MDM2/Hdm2. Interacts with host PSMC3 and HTATIP2. Interacts with STAB1; this interaction may overcome SATB1-mediated repression of IL2 and IL2RA (interleukin) in T cells by binding to the same domain than HDAC1. Interacts (when acetylated) with human CDK13, thereby increasing HIV-1 mRNA splicing and promoting the production of the doubly spliced HIV-1 protein Nef. In terms of processing, acetylation by EP300, CREBBP, GCN5L2/GCN5 and PCAF regulates the transactivation activity of Tat. Phosphorylated by EIF2AK2 on serine and threonine residues adjacent to the basic region important for TAR RNA binding and function. Phosphorylation of Tat by EIF2AK2 is dependent on the prior activation of EIF2AK2 by dsRNA. Post-translationally, asymmetrical arginine methylation by host PRMT6 seems to diminish the transactivation capacity of Tat and affects the interaction with host CCNT1. In terms of processing, polyubiquitination by MDM2 does not target Tat to degradation, but activates its transactivation function and fosters interaction with CCNT1 and TAR RNA.

It is found in the host nucleus. It localises to the host nucleolus. Its subcellular location is the host cytoplasm. The protein localises to the secreted. Functionally, transcriptional activator that increases RNA Pol II processivity, thereby increasing the level of full-length viral transcripts. Recognizes a hairpin structure at the 5'-LTR of the nascent viral mRNAs referred to as the transactivation responsive RNA element (TAR) and recruits the cyclin T1-CDK9 complex (P-TEFb complex) that will in turn hyperphosphorylate the RNA polymerase II to allow efficient elongation. The CDK9 component of P-TEFb and other Tat-activated kinases hyperphosphorylate the C-terminus of RNA Pol II that becomes stabilized and much more processive. Other factors such as HTATSF1/Tat-SF1, SUPT5H/SPT5, and HTATIP2 are also important for Tat's function. Besides its effect on RNA Pol II processivity, Tat induces chromatin remodeling of proviral genes by recruiting the histone acetyltransferases (HATs) CREBBP, EP300 and PCAF to the chromatin. This also contributes to the increase in proviral transcription rate, especially when the provirus integrates in transcriptionally silent region of the host genome. To ensure maximal activation of the LTR, Tat mediates nuclear translocation of NF-kappa-B by interacting with host RELA. Through its interaction with host TBP, Tat may also modulate transcription initiation. Tat can reactivate a latently infected cell by penetrating in it and transactivating its LTR promoter. In the cytoplasm, Tat is thought to act as a translational activator of HIV-1 mRNAs. In terms of biological role, extracellular circulating Tat can be endocytosed by surrounding uninfected cells via the binding to several surface receptors such as CD26, CXCR4, heparan sulfate proteoglycans (HSPG) or LDLR. Neurons are rarely infected, but they internalize Tat via their LDLR. Endosomal low pH allows Tat to cross the endosome membrane to enter the cytosol and eventually further translocate into the nucleus, thereby inducing severe cell dysfunctions ranging from cell activation to cell death. Through its interaction with nuclear HATs, Tat is potentially able to control the acetylation-dependent cellular gene expression. Tat seems to inhibit the HAT activity of KAT5/Tip60 and TAF1, and consequently modify the expression of specific cellular genes. Modulates the expression of many cellular genes involved in cell survival, proliferation or in coding for cytokines (such as IL10) or cytokine receptors. May be involved in the derepression of host interleukin IL2 expression. Mediates the activation of cyclin-dependent kinases and dysregulation of microtubule network. Tat plays a role in T-cell and neurons apoptosis. Tat induced neurotoxicity and apoptosis probably contribute to neuroAIDS. Host extracellular matrix metalloproteinase MMP1 cleaves Tat and decreases Tat's mediated neurotoxicity. Circulating Tat also acts as a chemokine-like and/or growth factor-like molecule that binds to specific receptors on the surface of the cells, affecting many cellular pathways. In the vascular system, Tat binds to ITGAV/ITGB3 and ITGA5/ITGB1 integrins dimers at the surface of endothelial cells and competes with bFGF for heparin-binding sites, leading to an excess of soluble bFGF. Binds to KDR/VEGFR-2. All these Tat-mediated effects enhance angiogenesis in Kaposi's sarcoma lesions. The chain is Protein Tat from Homo sapiens (Human).